Consider the following 102-residue polypeptide: Putative defensin-like protein 152 (102 aa).

An N-terminal signal peptide occupies residues Met-1–Gly-29. Intrachain disulfides connect Cys-34–Cys-93, Cys-51–Cys-71, Cys-56–Cys-87, and Cys-60–Cys-89.

Belongs to the DEFL family.

It is found in the secreted. In Arabidopsis thaliana (Mouse-ear cress), this protein is Putative defensin-like protein 152 (LCR11).